Reading from the N-terminus, the 865-residue chain is Probable beta-glucosidase J (865 aa).

Asp233 is an active-site residue. N-linked (GlcNAc...) asparagine glycosylation is found at Asn330, Asn447, Asn503, and Asn764. The 169-residue stretch at Thr411–Val579 folds into the PA14 domain.

Belongs to the glycosyl hydrolase 3 family.

It localises to the secreted. The enzyme catalyses Hydrolysis of terminal, non-reducing beta-D-glucosyl residues with release of beta-D-glucose.. It functions in the pathway glycan metabolism; cellulose degradation. Its function is as follows. Beta-glucosidases are one of a number of cellulolytic enzymes involved in the degradation of cellulosic biomass. Catalyzes the last step releasing glucose from the inhibitory cellobiose. The polypeptide is Probable beta-glucosidase J (bglJ) (Aspergillus fumigatus (strain ATCC MYA-4609 / CBS 101355 / FGSC A1100 / Af293) (Neosartorya fumigata)).